The following is a 304-amino-acid chain: Protein phosphatase PTC7 homolog (304 aa).

The N-terminal 68 residues, 1–68 (MFSVLSYGRL…GDDACFVARH (68 aa)), are a transit peptide targeting the mitochondrion. A PPM-type phosphatase domain is found at 69–299 (RSADVLGVAD…DDITVLLSIV (231 aa)). Residues Asp78, Gly79, and Asp223 each coordinate Mn(2+).

This sequence belongs to the PP2C family. As to quaternary structure, interacts with FBXL4, BNIP3 and NIX; these interactions are important for ubiquitination and degradation of BNIP3 and NIX. The cofactor is Mg(2+). It depends on Mn(2+) as a cofactor. As to expression, expressed in keratinocytes (at protein level).

It localises to the mitochondrion matrix. It carries out the reaction O-phospho-L-seryl-[protein] + H2O = L-seryl-[protein] + phosphate. The catalysed reaction is O-phospho-L-threonyl-[protein] + H2O = L-threonyl-[protein] + phosphate. Inhibited by sodium orthovanadate. In terms of biological role, protein phosphatase that plays an essential role in mitochondrial metabolism and biogenesis. Positively regulates biosynthesis of the ubiquinone, coenzyme Q. Dephosphorylates the ubiquinone biosynthesis protein COQ7 which is likely to lead to its activation. Serves as a crucial sensor for mitophagy, though the underlying mechanism remains ambiguous. May dephosphorylate BNIP3 and NIX and thereby directly regulates mitophagy receptor function and stability. Alternatively, promotes SCF-FBXL4-dependent ubiquitination and degradation of BNIP3 and NIX independently of its catalytic activity to restrain mitophagy. The chain is Protein phosphatase PTC7 homolog (PPTC7) from Homo sapiens (Human).